The primary structure comprises 364 residues: Spermidine/putrescine import ATP-binding protein PotA (364 aa).

The 231-residue stretch at 6-236 folds into the ABC transporter domain; sequence IEIRQIYKSY…PANLHVAMFI (231 aa). 38–45 is a binding site for ATP; it reads GPSGCGKT.

Belongs to the ABC transporter superfamily. Spermidine/putrescine importer (TC 3.A.1.11.1) family. As to quaternary structure, the complex is composed of two ATP-binding proteins (PotA), two transmembrane proteins (PotB and PotC) and a solute-binding protein (PotD).

It localises to the cell inner membrane. It carries out the reaction ATP + H2O + polyamine-[polyamine-binding protein]Side 1 = ADP + phosphate + polyamineSide 2 + [polyamine-binding protein]Side 1.. Its function is as follows. Part of the ABC transporter complex PotABCD involved in spermidine/putrescine import. Responsible for energy coupling to the transport system. The protein is Spermidine/putrescine import ATP-binding protein PotA of Legionella pneumophila (strain Lens).